The primary structure comprises 91 residues: Small ribosomal subunit protein uS19 (91 aa).

Belongs to the universal ribosomal protein uS19 family.

Its function is as follows. Protein S19 forms a complex with S13 that binds strongly to the 16S ribosomal RNA. The sequence is that of Small ribosomal subunit protein uS19 from Pseudoalteromonas atlantica (strain T6c / ATCC BAA-1087).